A 251-amino-acid chain; its full sequence is Probable phosphatase Sputcn32_1369 (251 aa).

Zn(2+) is bound by residues His-8, His-10, His-16, His-41, Glu-74, His-102, His-132, Asp-193, and His-195.

This sequence belongs to the PHP family. The cofactor is Zn(2+).

The polypeptide is Probable phosphatase Sputcn32_1369 (Shewanella putrefaciens (strain CN-32 / ATCC BAA-453)).